A 356-amino-acid chain; its full sequence is Neutral protease 2 homolog MEP5 (356 aa).

The signal sequence occupies residues 1–19 (MRVSSSLIALAALAVQALA). Positions 20 to 179 (LPVNELAERD…ASAIPELDKR (160 aa)) are excised as a propeptide. Disulfide bonds link cysteine 187–cysteine 259 and cysteine 266–cysteine 284. Residue histidine 308 participates in Zn(2+) binding. The active site involves glutamate 309. The Zn(2+) site is built by histidine 312 and aspartate 323.

The protein belongs to the peptidase M35 family. Zn(2+) is required as a cofactor.

It is found in the secreted. It carries out the reaction Preferential cleavage of bonds with hydrophobic residues in P1'. Also 3-Asn-|-Gln-4 and 8-Gly-|-Ser-9 bonds in insulin B chain.. Functionally, secreted metalloproteinase that allows assimilation of proteinaceous substrates. Shows high activities on basic nuclear substrates such as histone and protamine. May be involved in virulence. This chain is Neutral protease 2 homolog MEP5 (MEP5), found in Coccidioides posadasii (strain C735) (Valley fever fungus).